The sequence spans 116 residues: Iron-sulfur cluster insertion protein ErpA (116 aa).

Positions 44, 108, and 110 each coordinate iron-sulfur cluster.

It belongs to the HesB/IscA family. As to quaternary structure, homodimer. Requires iron-sulfur cluster as cofactor.

Its function is as follows. Required for insertion of 4Fe-4S clusters for at least IspG. The sequence is that of Iron-sulfur cluster insertion protein ErpA from Shewanella amazonensis (strain ATCC BAA-1098 / SB2B).